Here is a 330-residue protein sequence, read N- to C-terminus: MDPTTPAWGNESTTMNGNDQALPLLCGKETLIPVFLILFIALVGLVGNGFVLWLLGFCMRRNAFSVYVLSLAGADFLFLCFQLINCLVYLSNFFCSISIDFPSFFTTVMTCAYLAGLSMLSTISTERCLSVLWPIWYRCRRPRHLSAVVCVLLWALSLLLSILEGKFCGFFFSDGDSGWCQTFDFITAAWLIFLFMVLCGSSLALLVRILCGSRGLPLTRLYLTILLTVLVFLLCGLPFGIQWFLILWIWENSDVLFCHIHPVSVVLSSLNSSANPIIYFFVGTFRKQWRLQQPILKLALQRALQDTAEVDHSEGCFRQGTPEMSRSSLV.

At 1 to 33 (MDPTTPAWGNESTTMNGNDQALPLLCGKETLIP) the chain is on the extracellular side. The chain crosses the membrane as a helical span at residues 34–54 (VFLILFIALVGLVGNGFVLWL). Over 55–63 (LGFCMRRNA) the chain is Cytoplasmic. A helical transmembrane segment spans residues 64-84 (FSVYVLSLAGADFLFLCFQLI). Residues 85–96 (NCLVYLSNFFCS) lie on the Extracellular side of the membrane. A helical transmembrane segment spans residues 97-117 (ISIDFPSFFTTVMTCAYLAGL). Over 118-144 (SMLSTISTERCLSVLWPIWYRCRRPRH) the chain is Cytoplasmic. The helical transmembrane segment at 145 to 165 (LSAVVCVLLWALSLLLSILEG) threads the bilayer. Residues 166-184 (KFCGFFFSDGDSGWCQTFD) lie on the Extracellular side of the membrane. Residues 185 to 205 (FITAAWLIFLFMVLCGSSLAL) form a helical membrane-spanning segment. The Cytoplasmic portion of the chain corresponds to 206 to 228 (LVRILCGSRGLPLTRLYLTILLT). Residues 229–249 (VLVFLLCGLPFGIQWFLILWI) form a helical membrane-spanning segment. The Extracellular portion of the chain corresponds to 250-264 (WENSDVLFCHIHPVS). The chain crosses the membrane as a helical span at residues 265–285 (VVLSSLNSSANPIIYFFVGTF). The Cytoplasmic segment spans residues 286–330 (RKQWRLQQPILKLALQRALQDTAEVDHSEGCFRQGTPEMSRSSLV).

Belongs to the G-protein coupled receptor 1 family. Mas subfamily.

It localises to the cell membrane. Mast cell-specific receptor for basic secretagogues, i.e. cationic amphiphilic drugs, as well as endo- or exogenous peptides, consisting of a basic head group and a hydrophobic core. Recognizes and binds small molecules containing a cyclized tetrahydroisoquinoline (THIQ), such as non-steroidal neuromuscular blocking drugs (NMBDs), including tubocurarine and atracurium. In response to these compounds, mediates pseudo-allergic reactions characterized by histamine release, inflammation and airway contraction. The sequence is that of Mas-related G-protein coupled receptor member X2 (MRGPRX2) from Pongo pygmaeus (Bornean orangutan).